We begin with the raw amino-acid sequence, 259 residues long: UPF0739 protein C1orf74 homolog (259 aa).

It belongs to the UPF0739 family.

The chain is UPF0739 protein C1orf74 homolog from Danio rerio (Zebrafish).